Consider the following 283-residue polypeptide: Undecaprenyl-diphosphatase (283 aa).

The next 6 membrane-spanning stretches (helical) occupy residues 47 to 67, 94 to 114, 127 to 147, 197 to 217, 227 to 247, and 261 to 281; these read PGLS…IAYF, LGIA…CIKL, VPAI…AELL, AARF…LVEL, GGVL…WLAI, and IFVV…SGSA.

The protein belongs to the UppP family.

The protein resides in the cell inner membrane. It catalyses the reaction di-trans,octa-cis-undecaprenyl diphosphate + H2O = di-trans,octa-cis-undecaprenyl phosphate + phosphate + H(+). Functionally, catalyzes the dephosphorylation of undecaprenyl diphosphate (UPP). Confers resistance to bacitracin. The polypeptide is Undecaprenyl-diphosphatase (Synechococcus sp. (strain CC9311)).